A 313-amino-acid polypeptide reads, in one-letter code: Formimidoylglutamase (313 aa).

Mn(2+)-binding residues include histidine 130, aspartate 155, histidine 157, aspartate 159, aspartate 241, and aspartate 243.

This sequence belongs to the arginase family. Requires Mn(2+) as cofactor.

The catalysed reaction is N-formimidoyl-L-glutamate + H2O = formamide + L-glutamate. Its pathway is amino-acid degradation; L-histidine degradation into L-glutamate; L-glutamate from N-formimidoyl-L-glutamate (hydrolase route): step 1/1. Catalyzes the conversion of N-formimidoyl-L-glutamate to L-glutamate and formamide. This is Formimidoylglutamase from Salmonella newport (strain SL254).